A 94-amino-acid chain; its full sequence is Small ribosomal subunit protein uS19 (94 aa).

This sequence belongs to the universal ribosomal protein uS19 family.

Protein S19 forms a complex with S13 that binds strongly to the 16S ribosomal RNA. The protein is Small ribosomal subunit protein uS19 of Natranaerobius thermophilus (strain ATCC BAA-1301 / DSM 18059 / JW/NM-WN-LF).